Here is an 80-residue protein sequence, read N- to C-terminus: Cell division protein ZapB (80 aa).

The stretch at 3 to 80 (FEVLEQLESK…ALLGKMDEVE (78 aa)) forms a coiled coil.

It belongs to the ZapB family. In terms of assembly, homodimer. The ends of the coiled-coil dimer bind to each other, forming polymers. Interacts with FtsZ.

It localises to the cytoplasm. In terms of biological role, non-essential, abundant cell division factor that is required for proper Z-ring formation. It is recruited early to the divisome by direct interaction with FtsZ, stimulating Z-ring assembly and thereby promoting cell division earlier in the cell cycle. Its recruitment to the Z-ring requires functional FtsA or ZipA. The polypeptide is Cell division protein ZapB (Vibrio parahaemolyticus serotype O3:K6 (strain RIMD 2210633)).